A 150-amino-acid polypeptide reads, in one-letter code: Plasmin C (150 aa).

The signal sequence occupies residues 1 to 14; the sequence is MRSFFLLCALVAVC.

The protein is Plasmin C (PLSC) of Physarum polycephalum (Slime mold).